Reading from the N-terminus, the 442-residue chain is D-serine dehydratase 2 (442 aa).

Lys-118 carries the post-translational modification N6-(pyridoxal phosphate)lysine.

It belongs to the serine/threonine dehydratase family. DsdA subfamily. In terms of assembly, monomer. Pyridoxal 5'-phosphate is required as a cofactor.

The catalysed reaction is D-serine = pyruvate + NH4(+). The sequence is that of D-serine dehydratase 2 from Escherichia coli O6:K15:H31 (strain 536 / UPEC).